A 405-amino-acid chain; its full sequence is Cystathionine gamma-lyase (405 aa).

Residues arginine 62, tyrosine 114, and arginine 119 each coordinate substrate. The residue at position 212 (lysine 212) is an N6-(pyridoxal phosphate)lysine. Glutamate 339 is a binding site for substrate.

This sequence belongs to the trans-sulfuration enzymes family. In terms of assembly, homotetramer. Interacts with CALM in a calcium-dependent manner. Pyridoxal 5'-phosphate serves as cofactor.

The protein localises to the cytoplasm. It catalyses the reaction L,L-cystathionine + H2O = 2-oxobutanoate + L-cysteine + NH4(+). It functions in the pathway amino-acid biosynthesis; L-cysteine biosynthesis; L-cysteine from L-homocysteine and L-serine: step 2/2. Functionally, catalyzes the last step in the trans-sulfuration pathway from methionine to cysteine. Has broad substrate specificity. Converts cystathionine to cysteine, ammonia and 2-oxobutanoate. Converts two cysteine molecules to lanthionine and hydrogen sulfide. Can also accept homocysteine as substrate. Specificity depends on the levels of the endogenous substrates. Generates the endogenous signaling molecule hydrogen sulfide (H2S), and so contributes to the regulation of blood pressure. Acts as a cysteine-protein sulfhydrase by mediating sulfhydration of target proteins: sulfhydration consists of converting -SH groups into -SSH on specific cysteine residues of target proteins such as GAPDH, PTPN1 and NF-kappa-B subunit RELA, thereby regulating their function. This is Cystathionine gamma-lyase (CTH) from Bos taurus (Bovine).